Reading from the N-terminus, the 1527-residue chain is uncharacterized protein (1527 aa).

Coiled coils occupy residues 262-293 (NVEISRDKIKKLKDKNEIFNQLINEFGENINE), 699-751 (QQQQ…SEKL), 905-932 (NNLNIINNNQENNNNNNNDLKETIENQI), and 1217-1255 (KIISSELELEQQQQQQQQQQQQQQQQQQQQQQQQQQKSS). The segment at 683–734 (TNQEQEQDQQDQPPPPQQQQEQQQEQQQQQEQQQQQDQQQQDQQQDQQEKQQ) is disordered. Low complexity predominate over residues 700 to 728 (QQQEQQQEQQQQQEQQQQQDQQQQDQQQD).

This is an uncharacterized protein from Dictyostelium discoideum (Social amoeba).